The chain runs to 787 residues: MGRKLYYVLATLQLVAVFLFCGGFFPQKVVLKNDSKFIVNPEVQLASKPVFKKLVLVVIDALRSDFLFQKDSSDFEFLHGLLNSGEAWGYTAYSNPPTVTLPRLKGITTGSAPNFLDAILNVAEDDTSSNLKEQDSLLKQFHTHHYKMNFFGDDTWLKLFPLEFFSEYDGTNSFFVSDFEEVDFNVTRHVPYQMEHQKNWDVLILHYLGLDHIGHKGGSKSHFMPSKHREMDSVIKQIYEKIDGDTLMVVLGDHGMNDLGNHGGSSSGETSAALAFLSKRLKKYQSSDIQQSSNVPVEDAHPDYKYLKEVEQIDIVPTLSMLFNLPIPKNSMGVIIDELLQLLPSKLAAIKVQDNYLQLTKLKPGYEAQLEKKSAGTLLEEMREIQSSLAMAATNYNYTFLTYGTTLMIIGTLIVTVWNFQLSQEYIEHVGTSVLLGISMFASSFIEEEHQIWWWITISVLLLMQISNGKKLVVLSGLRLIRGWNNSGQKYIYDNVLHTLLKSHTSVLWWLNVVTFLSVGFPFLRNKDESEKMVSLLSVSFLALSSITYKICFAIVNGDKVPSGLYTFALRSCAMYLANENATESDISQCLVPIARIFFQICGVSIIILLFMKYALNKSTNMLNKLLSVIKFVLLLQTSSANIPLFLIFEILTSVTPDITPIFSLCLQNLTFFQFGGTNSIATVNLTNAYNGVSSNYNIYVVGVLMFLSNYAPSIYWALSLIPQSYKQKTLRLQHYYITGTCLMIACIALRYHLFIWSVFSPKLCYYAAWSLYNVVMDFAITLLGVL.

Residues Asn-33, Asn-185, and Asn-397 are each glycosylated (N-linked (GlcNAc...) asparagine). Transmembrane regions (helical) follow at residues Phe-400–Phe-420, Tyr-426–Ile-446, and Trp-455–Leu-475. Residue Asn-485 is glycosylated (N-linked (GlcNAc...) asparagine). 2 helical membrane passes run His-504–Leu-524 and Leu-536–Val-556. Asn-581 is a glycosylation site (N-linked (GlcNAc...) asparagine). Residues Leu-591–Phe-611 traverse the membrane as a helical segment. Asn-617 carries N-linked (GlcNAc...) asparagine glycosylation. Residues Val-629–Ile-651 form a helical membrane-spanning segment. Asn-669 is a glycosylation site (N-linked (GlcNAc...) asparagine). Helical transmembrane passes span Thr-671–Val-693, Ile-699–Leu-719, Gly-740–Phe-760, and Tyr-767–Leu-787.

It belongs to the PIGG/PIGN/PIGO family. PIGG subfamily.

The protein resides in the endoplasmic reticulum membrane. The protein operates within glycolipid biosynthesis; glycosylphosphatidylinositol-anchor biosynthesis. In terms of biological role, ethanolamine phosphate transferase involved in glycosylphosphatidylinositol-anchor biosynthesis. Transfers ethanolamine phosphate to the GPI second mannose. In Kluyveromyces lactis (strain ATCC 8585 / CBS 2359 / DSM 70799 / NBRC 1267 / NRRL Y-1140 / WM37) (Yeast), this protein is GPI ethanolamine phosphate transferase 2 (LAS21).